A 213-amino-acid polypeptide reads, in one-letter code: Heavy metal-binding protein HIP (213 aa).

The C1q domain occupies 80-213; it reads FKSHHVAFSA…MSTFTGFMLH (134 aa).

In terms of tissue distribution, pallium, gill and liver.

Its subcellular location is the secreted. In terms of biological role, binds heavy metals. May function as a carrier of divalent cations in plasma. The polypeptide is Heavy metal-binding protein HIP (Mytilus edulis (Blue mussel)).